A 415-amino-acid chain; its full sequence is Packaging protein 3 (415 aa).

Positions 1–55 (MHPVLRQMRPPPQQRQEQEQRQTCRAPSPPPTASGGATSAVDAAADGDYEPPRRR) are disordered. The segment at 1-173 (MHPVLRQMRP…VNQEINFQKS (173 aa)) is interaction with packaging protein 1. A phosphoserine; by host mark is found at Ser75 and Ser360. Positions 381 to 394 (GAGPGLAVAPARAG) are enriched in low complexity. The interval 381–415 (GAGPGLAVAPARAGNVGGVEEYDEDDEYEPEDGEY) is disordered. The segment covering 400–415 (EEYDEDDEYEPEDGEY) has biased composition (acidic residues).

The protein belongs to the adenoviridae packaging protein 3 family. In terms of assembly, part of the genome packaging complex composed of packaging proteins 1, 2 and 3; this complex specifically binds to the packaging sequence on the left end of viral genomic DNA and performs packaging of the viral genome. Interacts with hexon-linking protein IIIa; this interaction is required to promote correct genome packaging. Cleaved at different sites by the viral protease during virion maturation.

The protein resides in the host nucleus. Functionally, involved in viral genome packaging through its interaction with packaging proteins 1 and 2. After proteolytic cleavage by adenovirus protease, L1 52/55k protein is removed from the capsid during viral maturation. In Homo sapiens (Human), this protein is Packaging protein 3.